Here is a 682-residue protein sequence, read N- to C-terminus: Potassium-transporting ATPase ATP-binding subunit (682 aa).

A run of 4 helical transmembrane segments spans residues 34–54 (PVMF…LAMV), 58–78 (IAGS…TVLF), 219–239 (IALT…TATL), and 254–274 (VLVA…LSAI). D307 functions as the 4-aspartylphosphate intermediate in the catalytic mechanism. ATP is bound by residues D344, E348, 377–384 (FTAQSRMS), and K395. Mg(2+)-binding residues include D518 and D522. 3 helical membrane-spanning segments follow: residues 588 to 608 (FAII…LNVM), 616 to 636 (AILS…PLAL), and 662 to 682 (LVVP…LGLA).

The protein belongs to the cation transport ATPase (P-type) (TC 3.A.3) family. Type IA subfamily. In terms of assembly, the system is composed of three essential subunits: KdpA, KdpB and KdpC.

It localises to the cell inner membrane. The catalysed reaction is K(+)(out) + ATP + H2O = K(+)(in) + ADP + phosphate + H(+). Part of the high-affinity ATP-driven potassium transport (or Kdp) system, which catalyzes the hydrolysis of ATP coupled with the electrogenic transport of potassium into the cytoplasm. This subunit is responsible for energy coupling to the transport system and for the release of the potassium ions to the cytoplasm. This chain is Potassium-transporting ATPase ATP-binding subunit, found in Salmonella newport (strain SL254).